The primary structure comprises 246 residues: Proteasome subunit alpha type-6 (246 aa).

Belongs to the peptidase T1A family. The 26S proteasome consists of a 20S proteasome core and two 19S regulatory subunits. The 20S proteasome core is composed of 28 subunits that are arranged in four stacked rings, resulting in a barrel-shaped structure. The two end rings are each formed by seven alpha subunits, and the two central rings are each formed by seven beta subunits. The catalytic chamber with the active sites is on the inside of the barrel.

It localises to the cytoplasm. It is found in the nucleus. Functionally, the proteasome is a multicatalytic proteinase complex which is characterized by its ability to cleave peptides with Arg, Phe, Tyr, Leu, and Glu adjacent to the leaving group at neutral or slightly basic pH. The proteasome has an ATP-dependent proteolytic activity. The protein is Proteasome subunit alpha type-6 (PAA1) of Nicotiana tabacum (Common tobacco).